The sequence spans 581 residues: MNNKEITTLWCRLIIEELGRHGIHRFCISPGSRSTPLTAAAARNAGTRCTIFPDERAAAFFALGFARATGKPAVLICTSGTAVANYFPAVVEASFSNLPILVLSADRPFELFETGANQTIRQQGLFGTYSRWNIELPEPSEAIPAEALLSTIDYAVGRSLGSPPGPVHLNIPFREPFDPVNLSGPKPREASLTLWKQNNEPLNRFALSRKIADRAVVDRTKALLKNASSPLIVAGQLDSRTDAEAIGSLAETLDIPLYADISSQLRMNDTHAPLQPLLLSKRFTASFNPDLILHFGGKIVGKQLAITIKNRAPEHFIVINNSSRRYNPDHNVTLQIEAEPGEFAKLLVPEKSRSGKHERSLKALSDEIEKELDNYCASGKPLTEISTARILSGMIPESHGLFIANSMPIRDMDTYAALRKNGSAPLCAMNRGASGIDGNIATAAGLAQGLGTPVTLLIGDISFLHDLNSLTLLQGMEQPLHIVVVNNNGGGIFSFLPVATEKDIFETNFGTPQNYSIRAAAETFGISYNSPSSPESFKASYADLSRSAVSGIIEVNGSREENLAEHRRVNKQLRNIIDRHI.

The protein belongs to the TPP enzyme family. MenD subfamily. As to quaternary structure, homodimer. Requires Mg(2+) as cofactor. It depends on Mn(2+) as a cofactor. The cofactor is thiamine diphosphate.

It catalyses the reaction isochorismate + 2-oxoglutarate + H(+) = 5-enolpyruvoyl-6-hydroxy-2-succinyl-cyclohex-3-ene-1-carboxylate + CO2. Its pathway is quinol/quinone metabolism; 1,4-dihydroxy-2-naphthoate biosynthesis; 1,4-dihydroxy-2-naphthoate from chorismate: step 2/7. It participates in quinol/quinone metabolism; menaquinone biosynthesis. Catalyzes the thiamine diphosphate-dependent decarboxylation of 2-oxoglutarate and the subsequent addition of the resulting succinic semialdehyde-thiamine pyrophosphate anion to isochorismate to yield 2-succinyl-5-enolpyruvyl-6-hydroxy-3-cyclohexene-1-carboxylate (SEPHCHC). In Chlorobium phaeobacteroides (strain BS1), this protein is 2-succinyl-5-enolpyruvyl-6-hydroxy-3-cyclohexene-1-carboxylate synthase.